Here is a 336-residue protein sequence, read N- to C-terminus: Inositol 2-dehydrogenase (336 aa).

It belongs to the Gfo/Idh/MocA family. Homotetramer.

It carries out the reaction myo-inositol + NAD(+) = scyllo-inosose + NADH + H(+). Involved in the oxidation of myo-inositol (MI) to 2-keto-myo-inositol (2KMI or 2-inosose). The protein is Inositol 2-dehydrogenase of Pseudomonas syringae pv. syringae (strain B728a).